A 512-amino-acid polypeptide reads, in one-letter code: FAD-linked oxidoreductase iacH (512 aa).

Residues 1–22 (MVSLKACVVAYGFTLLPALVSG) form the signal peptide. 8 N-linked (GlcNAc...) asparagine glycosylation sites follow: Asn-39, Asn-55, Asn-69, Asn-210, Asn-217, Asn-278, Asn-295, and Asn-367. The region spanning 77–248 (LDTPDVQLVV…TSLEKKIYPG (172 aa)) is the FAD-binding PCMH-type domain.

This sequence belongs to the oxygen-dependent FAD-linked oxidoreductase family. FAD is required as a cofactor.

It participates in secondary metabolite biosynthesis. In terms of biological role, FAD-linked oxidoreductase; part of the gene cluster that mediates the biosynthesis of iso-A82775C, a enylepoxycyclohexane and biosynthetic precursor of the chloropestolide anticancer natural products. Within the cluster, the prenyltransferase iacE prenylates siccayne to generate pestalodiol E, using dimethylallyl diphosphate (DMAPP) as cosubstrate. The probable oxidoreductase iacF is then involved in the epoxidation of pestalodiol F to pestalodiol F, which is further converted to pestalofone A by the short-chain dehydrogenase/reductase iacG. Iso-A82775C is subsequently generated from pestalofone A by the short-chain dehydrogenase/reductase iacC. Iso-A82775C is further condensed with maldoxin via a Diels-Alder reaction to produce the anticancer natural products chloropestolides A to E. This is FAD-linked oxidoreductase iacH from Pestalotiopsis fici (strain W106-1 / CGMCC3.15140).